The following is a 225-amino-acid chain: Isoprenyl transferase 1 (225 aa).

D3 is a catalytic residue. A Mg(2+)-binding site is contributed by D3. Substrate contacts are provided by residues 4 to 7 (GNRR), W8, H21, and 49 to 51 (SME). Residue N52 is the Proton acceptor of the active site. Residues R55, R174, and 180 to 182 (RLS) contribute to the substrate site. Residue E193 coordinates Mg(2+).

The protein belongs to the UPP synthase family. As to quaternary structure, homodimer. It depends on Mg(2+) as a cofactor.

In terms of biological role, catalyzes the condensation of isopentenyl diphosphate (IPP) with allylic pyrophosphates generating different type of terpenoids. This chain is Isoprenyl transferase 1, found in Corynebacterium glutamicum (strain ATCC 13032 / DSM 20300 / JCM 1318 / BCRC 11384 / CCUG 27702 / LMG 3730 / NBRC 12168 / NCIMB 10025 / NRRL B-2784 / 534).